The chain runs to 631 residues: Phosphomethylpyrimidine synthase (631 aa).

Substrate contacts are provided by residues Asn-239, Met-268, Tyr-297, His-333, 353-355 (SRG), 394-397 (DGLR), and Glu-433. His-437 provides a ligand contact to Zn(2+). A substrate-binding site is contributed by Tyr-460. Residue His-501 coordinates Zn(2+). [4Fe-4S] cluster contacts are provided by Cys-581, Cys-584, and Cys-589.

Belongs to the ThiC family. In terms of assembly, homodimer. The cofactor is [4Fe-4S] cluster.

The enzyme catalyses 5-amino-1-(5-phospho-beta-D-ribosyl)imidazole + S-adenosyl-L-methionine = 4-amino-2-methyl-5-(phosphooxymethyl)pyrimidine + CO + 5'-deoxyadenosine + formate + L-methionine + 3 H(+). Its pathway is cofactor biosynthesis; thiamine diphosphate biosynthesis. Catalyzes the synthesis of the hydroxymethylpyrimidine phosphate (HMP-P) moiety of thiamine from aminoimidazole ribotide (AIR) in a radical S-adenosyl-L-methionine (SAM)-dependent reaction. This Escherichia coli O7:K1 (strain IAI39 / ExPEC) protein is Phosphomethylpyrimidine synthase.